The primary structure comprises 205 residues: Orotate phosphoribosyltransferase (205 aa).

116 to 124 (EDIITTGGS) provides a ligand contact to 5-phospho-alpha-D-ribose 1-diphosphate. Orotate contacts are provided by Thr-120 and Arg-148.

It belongs to the purine/pyrimidine phosphoribosyltransferase family. PyrE subfamily. Homodimer. Mg(2+) is required as a cofactor.

The catalysed reaction is orotidine 5'-phosphate + diphosphate = orotate + 5-phospho-alpha-D-ribose 1-diphosphate. The protein operates within pyrimidine metabolism; UMP biosynthesis via de novo pathway; UMP from orotate: step 1/2. Its function is as follows. Catalyzes the transfer of a ribosyl phosphate group from 5-phosphoribose 1-diphosphate to orotate, leading to the formation of orotidine monophosphate (OMP). This chain is Orotate phosphoribosyltransferase, found in Wolinella succinogenes (strain ATCC 29543 / DSM 1740 / CCUG 13145 / JCM 31913 / LMG 7466 / NCTC 11488 / FDC 602W) (Vibrio succinogenes).